A 429-amino-acid polypeptide reads, in one-letter code: Glutamate-1-semialdehyde 2,1-aminomutase (429 aa).

Lys267 carries the post-translational modification N6-(pyridoxal phosphate)lysine.

The protein belongs to the class-III pyridoxal-phosphate-dependent aminotransferase family. HemL subfamily. As to quaternary structure, homodimer. It depends on pyridoxal 5'-phosphate as a cofactor.

The protein localises to the cytoplasm. It catalyses the reaction (S)-4-amino-5-oxopentanoate = 5-aminolevulinate. It functions in the pathway porphyrin-containing compound metabolism; protoporphyrin-IX biosynthesis; 5-aminolevulinate from L-glutamyl-tRNA(Glu): step 2/2. In Herpetosiphon aurantiacus (strain ATCC 23779 / DSM 785 / 114-95), this protein is Glutamate-1-semialdehyde 2,1-aminomutase.